Reading from the N-terminus, the 545-residue chain is Chaperonin GroEL (545 aa).

ATP is bound by residues 29–32 (TLGP), Lys-50, 86–90 (DGTTT), Gly-415, and Asp-495.

The protein belongs to the chaperonin (HSP60) family. Forms a cylinder of 14 subunits composed of two heptameric rings stacked back-to-back. Interacts with the co-chaperonin GroES.

It localises to the cytoplasm. The enzyme catalyses ATP + H2O + a folded polypeptide = ADP + phosphate + an unfolded polypeptide.. Together with its co-chaperonin GroES, plays an essential role in assisting protein folding. The GroEL-GroES system forms a nano-cage that allows encapsulation of the non-native substrate proteins and provides a physical environment optimized to promote and accelerate protein folding. The chain is Chaperonin GroEL from Phocaeicola vulgatus (strain ATCC 8482 / DSM 1447 / JCM 5826 / CCUG 4940 / NBRC 14291 / NCTC 11154) (Bacteroides vulgatus).